Consider the following 284-residue polypeptide: Bifunctional protein FolD (284 aa).

NADP(+) contacts are provided by residues 166–168 (GAS) and Ile232.

The protein belongs to the tetrahydrofolate dehydrogenase/cyclohydrolase family. As to quaternary structure, homodimer.

The enzyme catalyses (6R)-5,10-methylene-5,6,7,8-tetrahydrofolate + NADP(+) = (6R)-5,10-methenyltetrahydrofolate + NADPH. The catalysed reaction is (6R)-5,10-methenyltetrahydrofolate + H2O = (6R)-10-formyltetrahydrofolate + H(+). It participates in one-carbon metabolism; tetrahydrofolate interconversion. In terms of biological role, catalyzes the oxidation of 5,10-methylenetetrahydrofolate to 5,10-methenyltetrahydrofolate and then the hydrolysis of 5,10-methenyltetrahydrofolate to 10-formyltetrahydrofolate. The polypeptide is Bifunctional protein FolD (Shewanella baltica (strain OS195)).